Here is a 163-residue protein sequence, read N- to C-terminus: Bursicon (163 aa).

Positions 1–23 (MKSSVCVLLKVLACILLPGGLNA) are cleaved as a signal peptide. Cystine bridges form between Cys39/Cys88, Cys53/Cys102, Cys63/Cys123, Cys67/Cys125, and Cys85/Cys128. The CTCK domain maps to 39–129 (CQVTPVIHVL…PLECMCRPCT (91 aa)).

Heterodimer of burs and pburs.

It is found in the secreted. Functionally, final heterodimeric neurohormone released at the end of the molting cycle, involved in the sclerotization (tanning) of the insect cuticle, melanization and wing spreading. This Aedes aegypti (Yellowfever mosquito) protein is Bursicon.